A 769-amino-acid chain; its full sequence is Integrin beta-2 (769 aa).

The signal sequence occupies residues 1–22; it reads MLCRCSPLLLLVGLLTLRSALS. Gln-23 is subject to Pyrrolidone carboxylic acid. Over 23 to 700 the chain is Extracellular; sequence QECAKYKVST…ETRECVKGPN (678 aa). The 51-residue stretch at 24-74 folds into the PSI domain; that stretch reads ECAKYKVSTCRDCIESGPGCAWCQKLNFSGQGEPDSVRCDTREQLLAKGCV. Cystine bridges form between Cys-25/Cys-43, Cys-33/Cys-447, Cys-36/Cys-62, Cys-46/Cys-73, Cys-191/Cys-198, Cys-246/Cys-286, Cys-386/Cys-400, Cys-420/Cys-445, Cys-449/Cys-467, Cys-459/Cys-470, Cys-472/Cys-481, Cys-483/Cys-514, Cys-497/Cys-512, Cys-506/Cys-517, Cys-519/Cys-534, Cys-536/Cys-559, Cys-541/Cys-557, Cys-549/Cys-562, Cys-564/Cys-573, Cys-575/Cys-598, Cys-582/Cys-596, Cys-590/Cys-601, Cys-603/Cys-612, Cys-615/Cys-618, Cys-622/Cys-662, Cys-628/Cys-647, Cys-631/Cys-643, and Cys-670/Cys-695. N-linked (GlcNAc...) asparagine glycosylation is found at Asn-50 and Asn-116. The VWFA domain occupies 124-363; that stretch reads GYPIDLYYLM…ELIKNAYNKL (240 aa). Mg(2+)-binding residues include Ser-136 and Ser-138. 4 residues coordinate Ca(2+): Ser-138, Asp-141, Asp-142, and Asp-173. Ca(2+) contacts are provided by Asn-229, Asp-231, Pro-233, and Glu-234. Glu-234 provides a ligand contact to Mg(2+). N-linked (GlcNAc...) asparagine glycosylation occurs at Asn-254. The Ca(2+) site is built by Asp-264 and Glu-347. A Cell attachment site motif is present at residues 397 to 399; the sequence is RGD. 4 consecutive I-EGF domains span residues 449-482, 483-535, 536-574, and 575-613; these read CGDS…KHCE, CQTQ…QFCE, CDNM…SACQ, and CLKS…PLCT. Asn-501 carries N-linked (GlcNAc...) asparagine glycosylation. Asn-642 is a glycosylation site (N-linked (GlcNAc...) asparagine). The chain crosses the membrane as a helical span at residues 701–723; sequence IAAIVGGTVGGVVLVGIFLLVIW. Residues 724-769 are Cytoplasmic-facing; it reads KVLTHLSDLREYKRFEKEKLKSQWNNDNPLFKSATTTVMNPKFAER. Phosphoserine is present on residues Ser-745 and Ser-756. A phosphothreonine mark is found at Thr-758 and Thr-760.

It belongs to the integrin beta chain family. As to quaternary structure, heterodimer of an alpha and a beta subunit. The ITGB2 beta subunit associates with the ITGAL, ITGAM, ITGAX or ITGAD alpha subunits. Found in a complex with CD177 and ITGAM/CD11b. Interacts with FGR. Interacts with COPS5 and RANBP9. Interacts with FLNA (via filamin repeats 4, 9, 12, 17, 19, 21, and 23). Interacts with THBD. Post-translationally, both Ser-745 and Ser-756 become phosphorylated when T-cells are exposed to phorbol esters. Phosphorylation on Thr-758 (but not on Ser-756) allows interaction with 14-3-3 proteins.

Its subcellular location is the cell membrane. The protein resides in the membrane raft. Its function is as follows. Integrin ITGAL/ITGB2 is a receptor for ICAM1, ICAM2, ICAM3 and ICAM4. Integrin ITGAL/ITGB2 is also a receptor for the secreted form of ubiquitin-like protein ISG15; the interaction is mediated by ITGAL. Integrins ITGAM/ITGB2 and ITGAX/ITGB2 are receptors for the iC3b fragment of the third complement component and for fibrinogen. Integrin ITGAX/ITGB2 recognizes the sequence G-P-R in fibrinogen alpha-chain. Integrin ITGAM/ITGB2 recognizes P1 and P2 peptides of fibrinogen gamma chain. Integrin ITGAM/ITGB2 is also a receptor for factor X. Integrin ITGAD/ITGB2 is a receptor for ICAM3 and VCAM1. Contributes to natural killer cell cytotoxicity. Involved in leukocyte adhesion and transmigration of leukocytes including T-cells and neutrophils. Triggers neutrophil transmigration during lung injury through PTK2B/PYK2-mediated activation. Integrin alpha-L/beta-2 in association with ICAM3, contributes to apoptotic neutrophil phagocytosis by macrophages. The protein is Integrin beta-2 (ITGB2) of Sus scrofa (Pig).